A 356-amino-acid chain; its full sequence is MKLSRIALATMLVAAPLAAANAGVTVTPLLLGYTFQDSQHNNGGKDGNLTNGPELQDDLFVGAALGIELTPWLGFEAEYNQVKGDVDGASAGAEYKQKQINGNFYVTSDLITKNYDSKIKPYVLLGAGHYKYDFDGVNRGTRGTSEEGTLGNAGVGAFWRLNDALSLRTEARATYNADEEFWNYTALAGLNVVLGGHLKPAAPVVEVAPVEPTPVAPQPQELTEDLNMELRVFFDTNKSNIKDQYKPEIAKVAEKLSEYPNATARIEGHTDNTGPRKLNERLSLARANSVKSALVNEYNVDASRLSTQGFAWDQPIADNKTKEGRAMNRRVFATITGSRTVVVQPGQEAAAPAAAQ.

The first 19 residues, 1–19 (MKLSRIALATMLVAAPLAA), serve as a signal peptide directing secretion. The OmpA-like domain occupies 221–339 (ELTEDLNMEL…RVFATITGSR (119 aa)). The meso-2,6-diaminopimelate site is built by asparagine 237, aspartate 271, threonine 273, asparagine 279, and arginine 286.

The protein belongs to the outer membrane OOP (TC 1.B.6) superfamily. Homotrimer. Forms a pore with a size of 1.3 nm.

It is found in the cell outer membrane. It localises to the host mitochondrion. In terms of biological role, functions as a porin. Induces apoptosis in human cell lines through caspase-dependent and AIF-dependent pathways. Purified Omp38 enters host cell and localizes to the mitochondria, which presumably leads to a release of proapoptotic molecules such as cytochrome c and AIF (apoptosis-inducing factor). Binds peptidoglycan, contributes to cell wall maintenance. The chain is Outer membrane protein Omp38 from Acinetobacter baumannii (strain ATCC 19606 / DSM 30007 / JCM 6841 / CCUG 19606 / CIP 70.34 / NBRC 109757 / NCIMB 12457 / NCTC 12156 / 81).